The primary structure comprises 617 residues: Dihydroxy-acid dehydratase (617 aa).

Residue aspartate 81 coordinates Mg(2+). Position 122 (cysteine 122) interacts with [2Fe-2S] cluster. Mg(2+)-binding residues include aspartate 123 and lysine 124. Lysine 124 is modified (N6-carboxylysine). Cysteine 195 is a binding site for [2Fe-2S] cluster. Glutamate 491 provides a ligand contact to Mg(2+). Serine 517 functions as the Proton acceptor in the catalytic mechanism.

The protein belongs to the IlvD/Edd family. Homodimer. [2Fe-2S] cluster is required as a cofactor. The cofactor is Mg(2+).

The enzyme catalyses (2R)-2,3-dihydroxy-3-methylbutanoate = 3-methyl-2-oxobutanoate + H2O. It carries out the reaction (2R,3R)-2,3-dihydroxy-3-methylpentanoate = (S)-3-methyl-2-oxopentanoate + H2O. The protein operates within amino-acid biosynthesis; L-isoleucine biosynthesis; L-isoleucine from 2-oxobutanoate: step 3/4. Its pathway is amino-acid biosynthesis; L-valine biosynthesis; L-valine from pyruvate: step 3/4. Functionally, functions in the biosynthesis of branched-chain amino acids. Catalyzes the dehydration of (2R,3R)-2,3-dihydroxy-3-methylpentanoate (2,3-dihydroxy-3-methylvalerate) into 2-oxo-3-methylpentanoate (2-oxo-3-methylvalerate) and of (2R)-2,3-dihydroxy-3-methylbutanoate (2,3-dihydroxyisovalerate) into 2-oxo-3-methylbutanoate (2-oxoisovalerate), the penultimate precursor to L-isoleucine and L-valine, respectively. This chain is Dihydroxy-acid dehydratase, found in Caulobacter vibrioides (strain ATCC 19089 / CIP 103742 / CB 15) (Caulobacter crescentus).